A 194-amino-acid chain; its full sequence is 5-formyltetrahydrofolate cyclo-ligase (194 aa).

ATP is bound by residues 6-10 (KSQLR), 139-146 (GRGAGFYD), and D177.

This sequence belongs to the 5-formyltetrahydrofolate cyclo-ligase family.

It catalyses the reaction (6S)-5-formyl-5,6,7,8-tetrahydrofolate + ATP = (6R)-5,10-methenyltetrahydrofolate + ADP + phosphate. Its pathway is one-carbon metabolism; tetrahydrofolate interconversion. Involved in the removal of 5-formyltetrahydrofolate. In vitro, it is a potent inhibitor of various folate-dependent enzymes in the C1 metabolism network and in vivo it might function as a folate storage. 5-formyltetrahydrofolate is also used as an antifolate rescue agent in cancer chemotherapy. Catalyzes the irreversible ATP-dependent transformation of 5-formyltetrahydrofolate (5-CHO-THF) to form 5,10-methenyltetrahydrofolate (5,10-CH=THF). The reverse reaction is catalyzed by the serine hydroxymethyltransferase GlyA (SHMT). This Mycolicibacterium smegmatis (strain ATCC 700084 / mc(2)155) (Mycobacterium smegmatis) protein is 5-formyltetrahydrofolate cyclo-ligase.